Here is a 98-residue protein sequence, read N- to C-terminus: UPF0251 protein Sputcn32_0687 (98 aa).

Belongs to the UPF0251 family.

The chain is UPF0251 protein Sputcn32_0687 from Shewanella putrefaciens (strain CN-32 / ATCC BAA-453).